A 217-amino-acid polypeptide reads, in one-letter code: 7-cyano-7-deazaguanine synthase (217 aa).

7–17 (LSGGMDSTTLL) contributes to the ATP binding site. Residues cysteine 183, cysteine 191, cysteine 194, and cysteine 197 each contribute to the Zn(2+) site.

Belongs to the QueC family. Zn(2+) serves as cofactor.

It carries out the reaction 7-carboxy-7-deazaguanine + NH4(+) + ATP = 7-cyano-7-deazaguanine + ADP + phosphate + H2O + H(+). It participates in purine metabolism; 7-cyano-7-deazaguanine biosynthesis. Its function is as follows. Catalyzes the ATP-dependent conversion of 7-carboxy-7-deazaguanine (CDG) to 7-cyano-7-deazaguanine (preQ(0)). The polypeptide is 7-cyano-7-deazaguanine synthase (Methanoregula boonei (strain DSM 21154 / JCM 14090 / 6A8)).